The following is a 647-amino-acid chain: Indolepyruvate oxidoreductase subunit IorA (647 aa).

4Fe-4S ferredoxin-type domains follow at residues proline 585 to glutamate 614 and lysine 616 to glutamate 645. Residues cysteine 594, cysteine 597, cysteine 600, cysteine 606, cysteine 625, cysteine 628, cysteine 631, and cysteine 635 each contribute to the [4Fe-4S] cluster site.

As to quaternary structure, heterodimer of the IorA and IorB subunits. Requires [4Fe-4S] cluster as cofactor.

The catalysed reaction is indole-3-pyruvate + 2 oxidized [2Fe-2S]-[ferredoxin] + CoA = (indol-3-yl)acetyl-CoA + 2 reduced [2Fe-2S]-[ferredoxin] + CO2 + H(+). Functionally, catalyzes the ferredoxin-dependent oxidative decarboxylation of arylpyruvates. The polypeptide is Indolepyruvate oxidoreductase subunit IorA (iorA) (Thermococcus kodakarensis (strain ATCC BAA-918 / JCM 12380 / KOD1) (Pyrococcus kodakaraensis (strain KOD1))).